We begin with the raw amino-acid sequence, 491 residues long: MSDPTEHPEILQDPSSSAPVQGRTDLPPGWLEVTSMDMDAQGVARRPDGKVVFIDGALPFEWVSASTHRKKNNWEQASLTAIHRESPQRVRPGCPHFGLHAGACGGCKMQHLHVGAQVAVKQRVLEDNLWHLGKVKAETVLRPIEGPAWGYRYRARLAVRHVEKKGKVLVGFHERKSRYIADMEVCPVLPPHVSAMLLPLRALIASMDARDTCPQIELACGDDVTALVLRHLEPLSEADLGRLRSFAAAHGVQWWLQPKGPDTVHLLDEGGPQLNYALPDFGITMPFKPTDFTQVNPHINRVLVTRALRLLDAGRTDRVIDWFCGLGNFTLPIATQAREVVGIEGSEALVARSRENYRKNQDDRPQGQALAPATFVARNLFEMTPEMLIADGVADKWLVDPPREGAFALAKALADIHQARIGAEDAPALPASAEGWTPPQRIVYVSCNPATLARDAGLLVHQAGYRCVAAGVVNMFPHTAHVESMAVFERV.

Residues 1–10 are compositionally biased toward basic and acidic residues; it reads MSDPTEHPEI. Positions 1–28 are disordered; the sequence is MSDPTEHPEILQDPSSSAPVQGRTDLPP. A TRAM domain is found at 18–81; sequence APVQGRTDLP…NNWEQASLTA (64 aa). [4Fe-4S] cluster-binding residues include C94, C104, C107, and C186. S-adenosyl-L-methionine contacts are provided by Q294, F323, N328, E344, N379, and D400. C447 acts as the Nucleophile in catalysis.

The protein belongs to the class I-like SAM-binding methyltransferase superfamily. RNA M5U methyltransferase family. RlmD subfamily.

It catalyses the reaction uridine(1939) in 23S rRNA + S-adenosyl-L-methionine = 5-methyluridine(1939) in 23S rRNA + S-adenosyl-L-homocysteine + H(+). Functionally, catalyzes the formation of 5-methyl-uridine at position 1939 (m5U1939) in 23S rRNA. This chain is 23S rRNA (uracil(1939)-C(5))-methyltransferase RlmD, found in Paracidovorax citrulli (strain AAC00-1) (Acidovorax citrulli).